The sequence spans 257 residues: AA9 family lytic polysaccharide monooxygenase U (257 aa).

Positions 1 to 19 (MKLYLAAFLGAVATPGAFA) are cleaved as a signal peptide. His20 contributes to the Cu(2+) binding site. N-linked (GlcNAc...) asparagine glycans are attached at residues Asn29 and Asn71. Cysteines 74 and 194 form a disulfide. Residue His113 coordinates Cu(2+). Asn161 carries an N-linked (GlcNAc...) asparagine glycan. Gln189 is a binding site for O2. Tyr191 provides a ligand contact to Cu(2+).

It belongs to the polysaccharide monooxygenase AA9 family. It depends on Cu(2+) as a cofactor.

The protein localises to the secreted. The catalysed reaction is [(1-&gt;4)-beta-D-glucosyl]n+m + reduced acceptor + O2 = 4-dehydro-beta-D-glucosyl-[(1-&gt;4)-beta-D-glucosyl]n-1 + [(1-&gt;4)-beta-D-glucosyl]m + acceptor + H2O.. Lytic polysaccharide monooxygenase (LPMO) that depolymerizes crystalline and amorphous polysaccharides via the oxidation of scissile alpha- or beta-(1-4)-glycosidic bonds, yielding C1 and C4 oxidation products. Catalysis by LPMOs requires the reduction of the active-site copper from Cu(II) to Cu(I) by a reducing agent and H(2)O(2) or O(2) as a cosubstrate. Shows no activity on wheat arabinoxylan, konjac glucomannan, acetylated spruce galactoglucomannan, or cellopentaose. The chain is AA9 family lytic polysaccharide monooxygenase U from Thermothielavioides terrestris (strain ATCC 38088 / NRRL 8126) (Thielavia terrestris).